Reading from the N-terminus, the 333-residue chain is Cap-specific mRNA (nucleoside-2'-O-)-methyltransferase (333 aa).

Residue Tyr22 coordinates mRNA. S-adenosyl-L-methionine-binding residues include Gln39, Tyr66, Gly68, Gly72, Asp95, Arg97, Val116, and Asp138. Residues Pro169–Val249 form a binding to NPH-I region. The interval Pro169–Lys333 is binding to Rap94. Lys175 serves as the catalytic For methyltransferase activity. MRNA is bound by residues Arg177–Phe180, Asp182, Ser205–Glu207, and Glu233. The interval Ser305–Lys333 is disordered. The span at Arg311–Asn322 shows a compositional bias: low complexity. The segment covering Arg323–Lys333 has biased composition (basic residues).

This sequence belongs to the class I-like SAM-binding methyltransferase superfamily. Poxvirus/kinetoplastid 2'-O-MTase family. Interacts with poly(A) polymerase catalytic subunit OPG063. Interacts with OPG109 and OPG123; these interactions might help linking transcription to capping and polyadenylation.

It localises to the virion. It catalyses the reaction a 5'-end (N(7)-methyl 5'-triphosphoguanosine)-ribonucleoside in mRNA + S-adenosyl-L-methionine = a 5'-end (N(7)-methyl 5'-triphosphoguanosine)-(2'-O-methyl-ribonucleoside) in mRNA + S-adenosyl-L-homocysteine + H(+). Its function is as follows. Displays methyltransferase, positive regulation of the poly(A) polymerase and transcription elongation activities. Involved in the modification of both mRNA ends and in intermediate and late gene positive transcription elongation. At the mRNAs 5' end, methylates the ribose 2' OH group of the first transcribed nucleotide, thereby producing a 2'-O-methylpurine cap. At the 3' end, functions as a processivity factor which stimulates the activity of the viral poly(A) polymerase OPG063 that creates mRNA's poly(A) tail. In the presence of OPG102, OPG063 does not dissociate from the RNA allowing tail elongation to around 250 adenylates. In Vaccinia virus (strain Western Reserve) (VACV), this protein is Cap-specific mRNA (nucleoside-2'-O-)-methyltransferase (OPG102).